Here is a 488-residue protein sequence, read N- to C-terminus: Katanin p60 ATPase-containing subunit A-like 1 (488 aa).

M1 is modified (N-acetylmethionine). A disordered region spans residues 95–179 (DPAVWPPPVP…GASDSEIPKF (85 aa)). Residues 116–127 (PNREVRPLRKDV) are compositionally biased toward basic and acidic residues. Positions 128–138 (GAGARGLVGRA) are enriched in low complexity. A compositionally biased stretch (basic and acidic residues) spans 142 to 167 (SKSDKPASRDKDYRARGRDDKARKNV). S172 carries the phosphoserine modification. 246 to 253 (GPPGTGKT) serves as a coordination point for ATP.

Belongs to the AAA ATPase family. Katanin p60 subunit A1 subfamily. A-like 1 sub-subfamily. Interacts with KATNB1 and KATNBL1. As to expression, widely expressed, including in testis, brain, heart, lung, kidney, liver, spleen, seminal vesicles and ovary. In testis, restricted to Sertoli cells within the seminiferous epithelium (at protein level).

It localises to the cytoplasm. Its subcellular location is the cytoskeleton. It is found in the spindle pole. The protein resides in the spindle. It carries out the reaction n ATP + n H2O + a microtubule = n ADP + n phosphate + (n+1) alpha/beta tubulin heterodimers.. Functionally, regulates microtubule dynamics in Sertoli cells, a process that is essential for spermiogenesis and male fertility. Severs microtubules in an ATP-dependent manner, promoting rapid reorganization of cellular microtubule arrays. Has microtubule-severing activity in vitro. The polypeptide is Katanin p60 ATPase-containing subunit A-like 1 (Katnal1) (Mus musculus (Mouse)).